Reading from the N-terminus, the 360-residue chain is uncharacterized protein (360 aa).

The 232-residue stretch at 4–235 (LSLQHIQKIY…PANMFVAGFI (232 aa)) folds into the ABC transporter domain. ATP is bound at residue 37–44 (GPSGCGKS).

This sequence belongs to the ABC transporter superfamily.

This is an uncharacterized protein from Escherichia coli O6:H1 (strain CFT073 / ATCC 700928 / UPEC).